Consider the following 63-residue polypeptide: Cecropin (63 aa).

The N-terminal stretch at 1-23 (MNFYKIFVFIALILALSVSQSEA) is a signal peptide. Position 62 is an arginine amide (R62).

Monomer. Hemolymph.

The protein resides in the secreted. Cecropins have lytic and antibacterial activity against several Gram-negative bacteria. This is Cecropin from Glossina morsitans morsitans (Savannah tsetse fly).